We begin with the raw amino-acid sequence, 352 residues long: MTKRKLTQNQKRRIHSNNVKALDRHHRRAKKEIDWQEEMLGDTQDGVVVTRYSMHADVENSQGEIFRCNLRRTLANVVVGDHVVWRRGHEKLQGISGVIEAIKPRENEIARPDYYDGLKVMASNIDRIIIVSSVLPALSLNIIDRYLVICENANIPAVILLNKVDLLTDEQWREAEEQLEIYRKIGYETLMISAISGKNMEKLTALLADGTSIFVGQSGVGKSSLINYILPEVNAQTGEISETSGLGQHTTTSSRLYHLPQGGNLIDSPGIREFGLWHLEPAQITNGYREFQYFLGTCKFRDCKHIDDPGCALREAVELGKIHPVRFDNYHRLISSREENKSQRHFMEQDIR.

Residues 1–15 (MTKRKLTQNQKRRIH) show a composition bias toward basic residues. A disordered region spans residues 1-26 (MTKRKLTQNQKRRIHSNNVKALDRHH). Residues 106-274 (ENEIARPDYY…LIDSPGIREF (169 aa)) form the CP-type G domain. Residues 162–165 (NKVD) and 216–224 (GQSGVGKSS) contribute to the GTP site. Zn(2+)-binding residues include cysteine 298, cysteine 303, histidine 305, and cysteine 311.

The protein belongs to the TRAFAC class YlqF/YawG GTPase family. RsgA subfamily. Monomer. Associates with 30S ribosomal subunit, binds 16S rRNA. Zn(2+) is required as a cofactor.

It localises to the cytoplasm. One of several proteins that assist in the late maturation steps of the functional core of the 30S ribosomal subunit. Helps release RbfA from mature subunits. May play a role in the assembly of ribosomal proteins into the subunit. Circularly permuted GTPase that catalyzes slow GTP hydrolysis, GTPase activity is stimulated by the 30S ribosomal subunit. This is Small ribosomal subunit biogenesis GTPase RsgA from Mannheimia succiniciproducens (strain KCTC 0769BP / MBEL55E).